A 503-amino-acid polypeptide reads, in one-letter code: Cytochrome P450 3A8 (503 aa).

Heme is bound at residue C442.

This sequence belongs to the cytochrome P450 family. Requires heme as cofactor.

Its subcellular location is the endoplasmic reticulum membrane. The protein localises to the microsome membrane. It catalyses the reaction an organic molecule + reduced [NADPH--hemoprotein reductase] + O2 = an alcohol + oxidized [NADPH--hemoprotein reductase] + H2O + H(+). Its function is as follows. Catalyzes nifedipine and nilvadipine oxidations. The chain is Cytochrome P450 3A8 (CYP3A8) from Macaca fascicularis (Crab-eating macaque).